Consider the following 874-residue polypeptide: Valine--tRNA ligase (874 aa).

The 'HIGH' region motif lies at Pro-51–His-61. A 'KMSKS' region motif is present at residues Lys-533–Ser-537. ATP is bound at residue Lys-536. Positions Leu-813–Gln-873 form a coiled coil.

This sequence belongs to the class-I aminoacyl-tRNA synthetase family. ValS type 1 subfamily. As to quaternary structure, monomer.

Its subcellular location is the cytoplasm. It carries out the reaction tRNA(Val) + L-valine + ATP = L-valyl-tRNA(Val) + AMP + diphosphate. In terms of biological role, catalyzes the attachment of valine to tRNA(Val). As ValRS can inadvertently accommodate and process structurally similar amino acids such as threonine, to avoid such errors, it has a 'posttransfer' editing activity that hydrolyzes mischarged Thr-tRNA(Val) in a tRNA-dependent manner. This is Valine--tRNA ligase from Helicobacter pylori (strain ATCC 700392 / 26695) (Campylobacter pylori).